A 113-amino-acid chain; its full sequence is Protein translation factor SUI1 homolog (113 aa).

Belongs to the SUI1 family.

Functionally, probably involved in translation. This is Protein translation factor SUI1 homolog from Salix bakko (Japanese willow).